We begin with the raw amino-acid sequence, 143 residues long: Nucleoside diphosphate kinase (143 aa).

Positions 11, 59, 87, 93, 104, and 114 each coordinate ATP. The Pros-phosphohistidine intermediate role is filled by His-117.

The protein belongs to the NDK family. As to quaternary structure, homotetramer. The cofactor is Mg(2+).

It is found in the cytoplasm. The enzyme catalyses a 2'-deoxyribonucleoside 5'-diphosphate + ATP = a 2'-deoxyribonucleoside 5'-triphosphate + ADP. It carries out the reaction a ribonucleoside 5'-diphosphate + ATP = a ribonucleoside 5'-triphosphate + ADP. Its function is as follows. Major role in the synthesis of nucleoside triphosphates other than ATP. The ATP gamma phosphate is transferred to the NDP beta phosphate via a ping-pong mechanism, using a phosphorylated active-site intermediate. In Clostridium perfringens (strain SM101 / Type A), this protein is Nucleoside diphosphate kinase.